The following is a 322-amino-acid chain: AA9 family lytic polysaccharide monooxygenase A (322 aa).

The signal sequence occupies residues 1–15; that stretch reads MKVLSLLAAASAASA. Cu(2+)-binding residues include histidine 16 and histidine 96. Intrachain disulfides connect cysteine 54/cysteine 182 and cysteine 152/cysteine 237. 2 residues coordinate O2: histidine 168 and glutamine 177. Threonine 228 and threonine 236 each carry an O-linked (Man...) threonine glycan. In terms of domain architecture, CBM1 spans 286–322; the sequence is CTAAQWAQCGGMGFSGCTTCASPYTCKKMNDYYSQCS.

Belongs to the polysaccharide monooxygenase AA9 family. Requires Cu(2+) as cofactor.

Its subcellular location is the secreted. The enzyme catalyses [(1-&gt;4)-beta-D-glucosyl]n+m + reduced acceptor + O2 = 4-dehydro-beta-D-glucosyl-[(1-&gt;4)-beta-D-glucosyl]n-1 + [(1-&gt;4)-beta-D-glucosyl]m + acceptor + H2O.. In terms of biological role, lytic polysaccharide monooxygenase (LPMO) that depolymerizes crystalline and amorphous polysaccharides via the oxidation of scissile alpha- or beta-(1-4)-glycosidic bonds, yielding C4 oxidation products. Catalysis by LPMOs requires the reduction of the active-site copper from Cu(II) to Cu(I) by a reducing agent and H(2)O(2) or O(2) as a cosubstrate. Active on tamarind xyloglucan and konjac glucomannan. This chain is AA9 family lytic polysaccharide monooxygenase A (gh61-1), found in Neurospora crassa (strain ATCC 24698 / 74-OR23-1A / CBS 708.71 / DSM 1257 / FGSC 987).